The following is a 277-amino-acid chain: Histone-lysine N-methyltransferase set-17 (277 aa).

The SET domain occupies 135 to 246 (FRIEESKLPN…INQELLVWYG (112 aa)). Residue tyrosine 245 participates in S-adenosyl-L-methionine binding.

It belongs to the class V-like SAM-binding methyltransferase superfamily. In terms of tissue distribution, expressed in the germline. Predominantly expressed in primary spermatocytes. Also expressed in the oocyte-producing germline of hermaphrodites.

It localises to the nucleus. The enzyme catalyses N(6)-methyl-L-lysyl(4)-[histone H3] + S-adenosyl-L-methionine = N(6),N(6)-dimethyl-L-lysyl(4)-[histone H3] + S-adenosyl-L-homocysteine + H(+). The catalysed reaction is L-lysyl(4)-[histone H3] + S-adenosyl-L-methionine = N(6)-methyl-L-lysyl(4)-[histone H3] + S-adenosyl-L-homocysteine + H(+). Its function is as follows. Histone methyltransferase that specifically mono- and di-methylates 'Lys-4' of histone H3 in vitro. Does not tri-methylate 'Lys-4' of histone H3 in vitro. Promotes spermatid development and fertility by positively regulating the transcription of spermatocyte-specific genes in primary spermatocytes. Together with spr-5, required for transgenerational fertility. The chain is Histone-lysine N-methyltransferase set-17 from Caenorhabditis elegans.